A 203-amino-acid chain; its full sequence is Thymidylate kinase (203 aa).

Residue 10-17 (GIDGCGKT) participates in ATP binding.

This sequence belongs to the thymidylate kinase family.

The catalysed reaction is dTMP + ATP = dTDP + ADP. Its function is as follows. Phosphorylation of dTMP to form dTDP in both de novo and salvage pathways of dTTP synthesis. This Thermoanaerobacter pseudethanolicus (strain ATCC 33223 / 39E) (Clostridium thermohydrosulfuricum) protein is Thymidylate kinase.